We begin with the raw amino-acid sequence, 56 residues long: Large ribosomal subunit protein bL32 (56 aa).

The interval 1–23 (MAVQQNKSTRSKRGMRRSHNALP) is disordered. Positions 9 to 19 (TRSKRGMRRSH) are enriched in basic residues.

Belongs to the bacterial ribosomal protein bL32 family.

The sequence is that of Large ribosomal subunit protein bL32 from Blochmanniella floridana.